A 719-amino-acid polypeptide reads, in one-letter code: MTEENNNTAATVTDQTEHSNIITIQTTLGDEDEDIHKCGKCLAEFSALDAFIQHKLSRSCKRTQDPQTNVVPNEGVSVEVRSSENECSSDETATANGEKQDAKVASGDKKRSRSTSEDESSSPSKVVWKLNTEGRYVCDICAKTFKTTNILRTHMFTHSDQKNFVCEMCETAFRTKGSLIRHKRRHTDERPYRCNQCGLAFRESGALTRHLKSLTPCTEKIRYSQCKEILVSKDGIRKEVQPSSPEPEKEQIPVVRVVEAGQEIIQIEVVEEVQQVASQPQTATVVEADNLICQAIINSGIALETEATEAAGQVEAQSPKAVLGAPETETRITEIQVTEECVETLAEETQDSSVKEVEPVQSKLYKCPHCERMFKTLNYLRVHVKGHVGYKPFKCLTCQKEFLTGYVLKKHMETHVSERRYKCGECGKQFKAIGHVREHMRAHSDERPYHCSFCDKSYKTKNALQVHHRTHADDKPYVCQHCSRGFREKSALVRHIRHHTGEKPFKCSKCGRGFAEHGTLNRHLRAKGGCFAQLKDCEHVVNSEEQEVTTESVSTTIVSDDPHAVLVEFSSVVADTQEYIIGAPAEEAAQGEEVAIIQDNQQQMDSHIMKVVQQIVSQSHGGHQIIVRNVTADETPGISDSGDTITIATPESLTEQVAMTLANAISDGTILTTTTEDTDETSHTTVTMVTAENVETIEQEEQYVIASPEEVEIQTVVVV.

Residues N20–T63 form a required for ubiquitin ligase activity region. The segment at S59–K125 is disordered. Basic and acidic residues predominate over residues E98–K109. Positions W128–L207 are mediates dimerization and DNA-binding. C2H2-type zinc fingers lie at residues Y136–H158 and F164–H186. The C2H2-type 3; degenerate zinc-finger motif lies at Y192–P216. C2H2-type zinc fingers lie at residues Y365–H387, F393–H415, Y421–H443, Y449–H471, and Y477–H499. The segment at F505 to K527 adopts a C2H2-type 9; degenerate zinc-finger fold.

The protein localises to the nucleus. The protein resides in the nucleoplasm. Its subcellular location is the cytoplasm. It catalyses the reaction S-ubiquitinyl-[E2 ubiquitin-conjugating enzyme]-L-cysteine + [acceptor protein]-L-lysine = [E2 ubiquitin-conjugating enzyme]-L-cysteine + N(6)-ubiquitinyl-[acceptor protein]-L-lysine.. The protein operates within protein modification; protein ubiquitination. May function as a transcriptional repressor. May also function as a ubiquitin ligase. Functions in cell survival and proliferation through control of the cell cycle. The sequence is that of Transcription factor E4F1 (e4f1) from Danio rerio (Zebrafish).